Here is a 196-residue protein sequence, read N- to C-terminus: Proteasome subunit beta (196 aa).

Residue M1 is a propeptide, removed in mature form; by autocatalysis. T2 functions as the Nucleophile in the catalytic mechanism.

This sequence belongs to the peptidase T1B family. In terms of assembly, the 20S proteasome core is composed of 14 alpha and 14 beta subunits that assemble into four stacked heptameric rings, resulting in a barrel-shaped structure. The two inner rings, each composed of seven catalytic beta subunits, are sandwiched by two outer rings, each composed of seven alpha subunits. The catalytic chamber with the active sites is on the inside of the barrel. Has a gated structure, the ends of the cylinder being occluded by the N-termini of the alpha-subunits. Is capped at one or both ends by the proteasome regulatory ATPase, PAN.

It is found in the cytoplasm. The catalysed reaction is Cleavage of peptide bonds with very broad specificity.. Its activity is regulated as follows. The formation of the proteasomal ATPase PAN-20S proteasome complex, via the docking of the C-termini of PAN into the intersubunit pockets in the alpha-rings, triggers opening of the gate for substrate entry. Interconversion between the open-gate and close-gate conformations leads to a dynamic regulation of the 20S proteasome proteolysis activity. Functionally, component of the proteasome core, a large protease complex with broad specificity involved in protein degradation. In Nanoarchaeum equitans (strain Kin4-M), this protein is Proteasome subunit beta.